Consider the following 186-residue polypeptide: RIO-type serine/threonine-protein kinase Rio1 (186 aa).

An ATP-binding site is contributed by lysine 15. The active-site Proton acceptor is the aspartate 124. Mg(2+) is bound by residues asparagine 129 and aspartate 140. The 4-aspartylphosphate intermediate role is filled by aspartate 140.

Belongs to the protein kinase superfamily. RIO-type Ser/Thr kinase family.

The enzyme catalyses L-seryl-[protein] + ATP = O-phospho-L-seryl-[protein] + ADP + H(+). It carries out the reaction L-threonyl-[protein] + ATP = O-phospho-L-threonyl-[protein] + ADP + H(+). It catalyses the reaction ATP + H2O = ADP + phosphate + H(+). Despite the protein kinase domain is proposed to act predominantly as an ATPase. This is RIO-type serine/threonine-protein kinase Rio1 (rio1) from Thermoplasma acidophilum (strain ATCC 25905 / DSM 1728 / JCM 9062 / NBRC 15155 / AMRC-C165).